A 141-amino-acid chain; its full sequence is Large ribosomal subunit protein uL11 (141 aa).

This sequence belongs to the universal ribosomal protein uL11 family. Part of the ribosomal stalk of the 50S ribosomal subunit. Interacts with L10 and the large rRNA to form the base of the stalk. L10 forms an elongated spine to which L12 dimers bind in a sequential fashion forming a multimeric L10(L12)X complex. In terms of processing, one or more lysine residues are methylated.

Functionally, forms part of the ribosomal stalk which helps the ribosome interact with GTP-bound translation factors. This Nostoc punctiforme (strain ATCC 29133 / PCC 73102) protein is Large ribosomal subunit protein uL11.